Reading from the N-terminus, the 443-residue chain is Tubulin epsilon and delta complex protein 2 (443 aa).

A coiled-coil region spans residues 8 to 33; it reads RRLVAELRDALDSCAERQRQLEQSLR. Disordered regions lie at residues 45 to 72 and 93 to 146; these read AETP…PSPQ and GLSK…PWVP. The segment covering 106–124 has biased composition (low complexity); the sequence is LKSGSASTATKASAPPSTS.

Interacts with TEDC1. Found in a complex with TEDC1, TEDC2, TUBE1 and TUBD1.

Its subcellular location is the cell projection. It localises to the cilium. It is found in the cytoplasm. The protein localises to the cytoskeleton. The protein resides in the microtubule organizing center. Its subcellular location is the centrosome. It localises to the centriole. Its function is as follows. Acts as a positive regulator of ciliary hedgehog signaling. Required for centriole stability. This Bos taurus (Bovine) protein is Tubulin epsilon and delta complex protein 2.